We begin with the raw amino-acid sequence, 1145 residues long: Protocadherin-19 (1145 aa).

Residues 1-21 form the signal peptide; it reads MESLLLPVLLLLAVLWTQAAA. 6 Cadherin domains span residues 22–129, 130–238, 239–346, 350–453, 454–563, and 569–672; these read LINL…APSF, PAAQ…NPVF, GEST…PPII, SVNS…HPHF, SKPY…TPVI, and INGT…QESM. The Extracellular segment spans residues 22 to 678; it reads LINLKYSVEE…QESMGSVNLS (657 aa). Ca(2+) is bound by residues E31, E32, D88, and D90. A disulfide bond links C93 and C99. Ca(2+) is bound by residues D121, N123, D124, N125, E140, D155, D157, E199, D212, D230, S231, N232, D233, N234, and E249. N261 carries an N-linked (GlcNAc...) asparagine glycan. D264, D266, N270, D305, E307, D338, N340, D341, N342, E360, D375, D377, N381, D412, and E414 together coordinate Ca(2+). N420 is a glycosylation site (N-linked (GlcNAc...) asparagine). The Ca(2+) site is built by D427, D445, E446, N447, D448, N449, E464, D479, D481, N485, N522, E524, and D537. N485 carries an N-linked (GlcNAc...) asparagine glycan. A glycan (N-linked (GlcNAc...) asparagine) is linked at N546. The Ca(2+) site is built by D555, V556, N557, D558, and N559. A glycan (N-linked (GlcNAc...) asparagine) is linked at N570. Residues D594, D596, N600, and D646 each contribute to the Ca(2+) site. N676 carries N-linked (GlcNAc...) asparagine glycosylation. The helical transmembrane segment at 679-699 threads the bilayer; it reads LIFIIALGSIAGILFVTMIFV. Residues 700 to 1145 are Cytoplasmic-facing; sequence AIKCKRDNKE…SVKRLKDIVL (446 aa). Disordered regions lie at residues 901–921 and 1094–1145; these read GNSL…EHDV and LEHH…DIVL. Basic and acidic residues-rich tracts occupy residues 906–921 and 1106–1145; these read DSGH…EHDV and SEAE…DIVL.

Homodimer; antiparallel.

Its subcellular location is the cell membrane. Calcium-dependent cell-adhesion protein. The chain is Protocadherin-19 (Pcdh19) from Mus musculus (Mouse).